Consider the following 71-residue polypeptide: Defensin 1 (71 aa).

Residues 1–25 (KTVAGFCIFFLVLFLAQEGVVKTEA) form the signal peptide. Intrachain disulfides connect cysteine 28–cysteine 71, cysteine 39–cysteine 60, and cysteine 45–cysteine 65.

The protein belongs to the DEFL family. May form dimers. Not glycosylated. In terms of processing, contains 4 disulfide bonds. Post-translationally, met-61 and Met-63 might be oxidized in some molecules.

Probably has antifungal activity. The chain is Defensin 1 from Arachis hypogaea (Peanut).